Here is a 609-residue protein sequence, read N- to C-terminus: Glutamine--fructose-6-phosphate aminotransferase [isomerizing] (609 aa).

C2 (nucleophile; for GATase activity) is an active-site residue. Positions C2 to R218 constitute a Glutamine amidotransferase type-2 domain. SIS domains are found at residues A286–L426 and L458–P599. The active-site For Fru-6P isomerization activity is the K604.

Homodimer.

The protein localises to the cytoplasm. The enzyme catalyses D-fructose 6-phosphate + L-glutamine = D-glucosamine 6-phosphate + L-glutamate. Functionally, catalyzes the first step in hexosamine metabolism, converting fructose-6P into glucosamine-6P using glutamine as a nitrogen source. The protein is Glutamine--fructose-6-phosphate aminotransferase [isomerizing] of Salmonella typhi.